The sequence spans 769 residues: Amino-acid acetyltransferase, mitochondrial (769 aa).

Positions 150 to 172 are disordered; it reads LKASPAKSGQEPTESPKESISAS. Residues 159–172 are compositionally biased toward polar residues; sequence QEPTESPKESISAS. Residues 590–759 form the N-acetyltransferase domain; it reads MQPRLGLNDP…YEAVCRSIQP (170 aa).

Belongs to the acetyltransferase family.

The protein localises to the mitochondrion. It catalyses the reaction L-glutamate + acetyl-CoA = N-acetyl-L-glutamate + CoA + H(+). The protein operates within amino-acid biosynthesis; L-arginine biosynthesis; N(2)-acetyl-L-ornithine from L-glutamate: step 1/4. N-acetylglutamate synthase involved in arginine biosynthesis. This is Amino-acid acetyltransferase, mitochondrial (arg2) from Penicillium rubens (strain ATCC 28089 / DSM 1075 / NRRL 1951 / Wisconsin 54-1255) (Penicillium chrysogenum).